Here is a 200-residue protein sequence, read N- to C-terminus: 3-isopropylmalate dehydratase small subunit (200 aa).

Belongs to the LeuD family. LeuD type 1 subfamily. Heterodimer of LeuC and LeuD.

It catalyses the reaction (2R,3S)-3-isopropylmalate = (2S)-2-isopropylmalate. Its pathway is amino-acid biosynthesis; L-leucine biosynthesis; L-leucine from 3-methyl-2-oxobutanoate: step 2/4. In terms of biological role, catalyzes the isomerization between 2-isopropylmalate and 3-isopropylmalate, via the formation of 2-isopropylmaleate. This chain is 3-isopropylmalate dehydratase small subunit, found in Yersinia pseudotuberculosis serotype I (strain IP32953).